We begin with the raw amino-acid sequence, 437 residues long: ATP-dependent protease ATPase subunit HslU (437 aa).

Residues valine 18, glycine 60 to glutamate 65, aspartate 250, glutamate 315, and arginine 387 each bind ATP.

Belongs to the ClpX chaperone family. HslU subfamily. In terms of assembly, a double ring-shaped homohexamer of HslV is capped on each side by a ring-shaped HslU homohexamer. The assembly of the HslU/HslV complex is dependent on binding of ATP.

It is found in the cytoplasm. Its function is as follows. ATPase subunit of a proteasome-like degradation complex; this subunit has chaperone activity. The binding of ATP and its subsequent hydrolysis by HslU are essential for unfolding of protein substrates subsequently hydrolyzed by HslV. HslU recognizes the N-terminal part of its protein substrates and unfolds these before they are guided to HslV for hydrolysis. The polypeptide is ATP-dependent protease ATPase subunit HslU (Methylobacterium nodulans (strain LMG 21967 / CNCM I-2342 / ORS 2060)).